The chain runs to 483 residues: Aspartyl/glutamyl-tRNA(Asn/Gln) amidotransferase subunit B (483 aa).

The protein belongs to the GatB/GatE family. GatB subfamily. In terms of assembly, heterotrimer of A, B and C subunits.

It carries out the reaction L-glutamyl-tRNA(Gln) + L-glutamine + ATP + H2O = L-glutaminyl-tRNA(Gln) + L-glutamate + ADP + phosphate + H(+). The enzyme catalyses L-aspartyl-tRNA(Asn) + L-glutamine + ATP + H2O = L-asparaginyl-tRNA(Asn) + L-glutamate + ADP + phosphate + 2 H(+). Allows the formation of correctly charged Asn-tRNA(Asn) or Gln-tRNA(Gln) through the transamidation of misacylated Asp-tRNA(Asn) or Glu-tRNA(Gln) in organisms which lack either or both of asparaginyl-tRNA or glutaminyl-tRNA synthetases. The reaction takes place in the presence of glutamine and ATP through an activated phospho-Asp-tRNA(Asn) or phospho-Glu-tRNA(Gln). In Roseiflexus castenholzii (strain DSM 13941 / HLO8), this protein is Aspartyl/glutamyl-tRNA(Asn/Gln) amidotransferase subunit B.